We begin with the raw amino-acid sequence, 559 residues long: Leucine-rich repeat-containing protein 71 (559 aa).

Residues 1 to 18 (MSSEQSAPGASPRAPRPG) show a composition bias toward low complexity. The segment at 1-56 (MSSEQSAPGASPRAPRPGTQKSSGAVTKKGERAAKEKPATVLPPVGEEEPKSPEEY) is disordered. Residues 28-38 (KKGERAAKEKP) are compositionally biased toward basic and acidic residues. LRR repeat units follow at residues 172 to 193 (NLWK…LPLC), 196 to 216 (TLRK…HKLM), 221 to 241 (TIAH…QLLG), 253 to 266 (TLVS…HIGD), and 281 to 302 (SLLW…KLAE). 2 stretches are compositionally biased toward basic and acidic residues: residues 324–348 (KGTQ…REKS) and 380–391 (KSWELAKKEEKL). The segment at 324-427 (KGTQERSRSP…PEQKPSRAKG (104 aa)) is disordered.

The polypeptide is Leucine-rich repeat-containing protein 71 (LRRC71) (Homo sapiens (Human)).